The sequence spans 1016 residues: FHIP family protein Bm1_18400 (1016 aa).

Disordered regions lie at residues 586–608 (DSLR…RSSF) and 757–778 (SDGF…PLGK).

This sequence belongs to the FHIP family.

This chain is FHIP family protein Bm1_18400, found in Brugia malayi (Filarial nematode worm).